An 89-amino-acid chain; its full sequence is Pigment-dispersing hormone peptides (89 aa).

The first 22 residues, 1–22 (MTAMAVSGKLLTALVLSTYILG), serve as a signal peptide directing secretion. Residue Ala86 is modified to Alanine amide.

It belongs to the arthropod PDH family.

Its subcellular location is the secreted. Functionally, capable of inducing pigment dispersion in the chromatophores of the fiddler crab Uca pugilator. In Romalea microptera (Eastern lubber grasshopper), this protein is Pigment-dispersing hormone peptides.